A 323-amino-acid chain; its full sequence is Beta-ketoacyl-[acyl-carrier-protein] synthase III 1 (323 aa).

Residues Cys114 and His254 contribute to the active site. The tract at residues 255 to 259 is ACP-binding; the sequence is QANLR. The active site involves Asn284.

Belongs to the thiolase-like superfamily. FabH family. As to quaternary structure, homodimer.

The protein localises to the cytoplasm. It carries out the reaction malonyl-[ACP] + acetyl-CoA + H(+) = 3-oxobutanoyl-[ACP] + CO2 + CoA. The protein operates within lipid metabolism; fatty acid biosynthesis. In terms of biological role, catalyzes the condensation reaction of fatty acid synthesis by the addition to an acyl acceptor of two carbons from malonyl-ACP. Catalyzes the first condensation reaction which initiates fatty acid synthesis and may therefore play a role in governing the total rate of fatty acid production. Possesses both acetoacetyl-ACP synthase and acetyl transacylase activities. Its substrate specificity determines the biosynthesis of branched-chain and/or straight-chain of fatty acids. This is Beta-ketoacyl-[acyl-carrier-protein] synthase III 1 from Lactiplantibacillus plantarum (strain ATCC BAA-793 / NCIMB 8826 / WCFS1) (Lactobacillus plantarum).